Here is a 110-residue protein sequence, read N- to C-terminus: Lichenan-specific phosphotransferase enzyme IIA component (110 aa).

The 99-residue stretch at Glu-3 to Lys-101 folds into the PTS EIIA type-3 domain. The active-site Tele-phosphohistidine intermediate; by HPr is His-77.

It localises to the cytoplasm. Functionally, the phosphoenolpyruvate-dependent sugar phosphotransferase system (PTS), a major carbohydrate active -transport system, catalyzes the phosphorylation of incoming sugar substrates concomitant with their translocation across the cell membrane. This system is involved in lichenan transport. The sequence is that of Lichenan-specific phosphotransferase enzyme IIA component (licA) from Bacillus subtilis (strain 168).